The primary structure comprises 212 residues: DNA-directed RNA polymerase III subunit RPC8 (212 aa).

Ser-162 carries the phosphoserine modification. Basic and acidic residues predominate over residues 166–184 (RELEERAQLENEIEGKNEE). Positions 166–194 (RELEERAQLENEIEGKNEETPQNEKPPAY) are disordered.

Belongs to the eukaryotic RPB7/RPC8 RNA polymerase subunit family. As to quaternary structure, component of the RNA polymerase III (Pol III) complex consisting of 17 subunits. RPC25/RPC8 and RPC17/RPC9 form a Pol III subcomplex.

It localises to the nucleus. DNA-dependent RNA polymerase catalyzes the transcription of DNA into RNA using the four ribonucleoside triphosphates as substrates. Specific peripheric component of RNA polymerase III which synthesizes small RNAs, such as 5S rRNA and tRNA. The RPC25/RPC8-RPC17/RPC9 subcomplex may bind Pol III transcripts emerging from the adjacent exit pore during elongation. This is DNA-directed RNA polymerase III subunit RPC8 (RPC25) from Saccharomyces cerevisiae (strain ATCC 204508 / S288c) (Baker's yeast).